The following is a 341-amino-acid chain: Cell division protein FtsX (341 aa).

The interval 1-34 (MSTTRTPKVSERVAPKPADPQPAKKKRGEDDDGP) is disordered. The Cytoplasmic segment spans residues 1-65 (MSTTRTPKVS…RRLGKQPIGS (65 aa)). A helical transmembrane segment spans residues 66–86 (FFTCLVMAVALSMPMGLSLLL). Residues 87–212 (KNIEQLGGSW…LAAILKLGDR (126 aa)) are Periplasmic-facing. Residues 213–233 (FVFGLAVMLISALLLVIGNTI) form a helical membrane-spanning segment. At 234–263 (RLHIENRRIEIEVIKLVGGTDAYVRRPFLY) the chain is on the cytoplasmic side. The chain crosses the membrane as a helical span at residues 264–284 (MGALYGLGAGLLAWGILAFGL). The Periplasmic portion of the chain corresponds to 285 to 311 (NWLNEAVVGLSGLYGSDFALGGVPASD). A helical transmembrane segment spans residues 312–332 (GLSLLIGAVLLGYIGAWIAVA). Topologically, residues 333–341 (RHLNELAPR) are cytoplasmic.

This sequence belongs to the ABC-4 integral membrane protein family. FtsX subfamily. As to quaternary structure, forms a membrane-associated complex with FtsE.

Its subcellular location is the cell inner membrane. Its function is as follows. Part of the ABC transporter FtsEX involved in cellular division. This is Cell division protein FtsX from Pseudomonas putida (Arthrobacter siderocapsulatus).